The following is a 474-amino-acid chain: Putative pectinesterase/pectinesterase inhibitor 38 (474 aa).

The tract at residues 1-130 (MVFGNEMCDE…HSLESITIDV (130 aa)) is pectinesterase inhibitor 38. The N-linked (GlcNAc...) asparagine glycan is linked to N80. The pectinesterase 38 stretch occupies residues 164–461 (DVVVAQDGSG…TLPKFIDSAS (298 aa)). Positions 241 and 271 each coordinate substrate. The active-site Proton donor; for pectinesterase activity is the D294. Cysteines 308 and 328 form a disulfide. The active-site Nucleophile; for pectinesterase activity is the D315. An N-linked (GlcNAc...) asparagine glycan is attached at N351. The substrate site is built by R380 and W382. A glycan (N-linked (GlcNAc...) asparagine) is linked at N409.

The protein in the N-terminal section; belongs to the PMEI family. In the C-terminal section; belongs to the pectinesterase family.

It localises to the secreted. The protein localises to the cell wall. The enzyme catalyses [(1-&gt;4)-alpha-D-galacturonosyl methyl ester](n) + n H2O = [(1-&gt;4)-alpha-D-galacturonosyl](n) + n methanol + n H(+). The protein operates within glycan metabolism; pectin degradation; 2-dehydro-3-deoxy-D-gluconate from pectin: step 1/5. Its function is as follows. Acts in the modification of cell walls via demethylesterification of cell wall pectin. The sequence is that of Putative pectinesterase/pectinesterase inhibitor 38 (PME38) from Arabidopsis thaliana (Mouse-ear cress).